Reading from the N-terminus, the 274-residue chain is Caldesmon, smooth muscle (274 aa).

2 disordered regions span residues 1–102 (SNLK…FSPK) and 179–274 (KGNV…EKEP). Basic and acidic residues-rich tracts occupy residues 12–21 (GSEKLKEKQQ) and 28–95 (DELK…EKKP). The span at 182-194 (VFSSPGGTGTPNK) shows a compositional bias: polar residues. 2 stretches are compositionally biased toward basic and acidic residues: residues 226-245 (SDLRPGDVSGKRNLWEKQSV) and 260-274 (KKSETDGLRQFEKEP).

It localises to the cytoplasm. The protein localises to the cytoskeleton. It is found in the myofibril. The protein resides in the stress fiber. Its function is as follows. Control of actomyosin interactions in smooth muscle and nonmuscle cells (could act as a bridge between myosin and actin filaments). Inhibits the actin-activated ATPase of myosin this inhibition is attenuated by calcium-calmodulin and is potentiated by tropomyosin. Interacts with actin, myosin, 2 molecules of tropomyosin and with calmodulin. In Meleagris gallopavo (Wild turkey), this protein is Caldesmon, smooth muscle (CALD1).